A 64-amino-acid polypeptide reads, in one-letter code: uncharacterized protein (64 aa).

Its subcellular location is the host cytoplasm. This is an uncharacterized protein from Enterobacteriaceae (Bacteriophage Mu).